The sequence spans 215 residues: Cytochrome b6 (215 aa).

The chain crosses the membrane as a helical span at residues 32–52; sequence IFYCFGGLVLTCFLIQVATGF. Position 35 (Cys35) interacts with heme c. Positions 86 and 100 each coordinate heme b. Helical transmembrane passes span 90 to 110, 116 to 136, and 186 to 206; these read ASMMVLMMVLHVFRVYLTGGF, LTWVTGVTLSVVTVSFGVTGY, and AHTFVLPLAAAVLMLTHFLMI. His187 and His202 together coordinate heme b.

The protein belongs to the cytochrome b family. PetB subfamily. As to quaternary structure, the 4 large subunits of the cytochrome b6-f complex are cytochrome b6, subunit IV (17 kDa polypeptide, PetD), cytochrome f and the Rieske protein, while the 4 small subunits are PetG, PetL, PetM and PetN. The complex functions as a dimer. It depends on heme b as a cofactor. Heme c serves as cofactor.

Its subcellular location is the plastid. It localises to the chloroplast thylakoid membrane. Component of the cytochrome b6-f complex, which mediates electron transfer between photosystem II (PSII) and photosystem I (PSI), cyclic electron flow around PSI, and state transitions. The protein is Cytochrome b6 of Phaeodactylum tricornutum (strain CCAP 1055/1).